Reading from the N-terminus, the 466-residue chain is Glycosyl hydrolase family 109 protein (466 aa).

The segment at residues 1-30 (MENTRRSFLKKVSAAGIGAAGLAMAGNAGA) is a signal peptide (tat-type signal). NAD(+) contacts are provided by residues 59 to 60 (SR), Asp-81, 130 to 133 (WEWH), 151 to 152 (EV), and Asn-180. Position 209 (Tyr-209) interacts with substrate. An NAD(+)-binding site is contributed by 241 to 245 (AEAQW). Residues Arg-246, 258-261 (YPTH), and Tyr-340 contribute to the substrate site. Residue Tyr-258 participates in NAD(+) binding.

It belongs to the Gfo/Idh/MocA family. Glycosyl hydrolase 109 subfamily. Requires NAD(+) as cofactor. Predicted to be exported by the Tat system. The position of the signal peptide cleavage has not been experimentally proven.

In terms of biological role, glycosidase. This Parabacteroides distasonis (strain ATCC 8503 / DSM 20701 / CIP 104284 / JCM 5825 / NCTC 11152) protein is Glycosyl hydrolase family 109 protein.